The primary structure comprises 176 residues: ATP-dependent protease subunit HslV (176 aa).

T2 is an active-site residue. 3 residues coordinate Na(+): G158, C161, and T164.

It belongs to the peptidase T1B family. HslV subfamily. In terms of assembly, a double ring-shaped homohexamer of HslV is capped on each side by a ring-shaped HslU homohexamer. The assembly of the HslU/HslV complex is dependent on binding of ATP.

Its subcellular location is the cytoplasm. The catalysed reaction is ATP-dependent cleavage of peptide bonds with broad specificity.. Allosterically activated by HslU binding. Functionally, protease subunit of a proteasome-like degradation complex believed to be a general protein degrading machinery. The chain is ATP-dependent protease subunit HslV from Pasteurella multocida (strain Pm70).